The chain runs to 589 residues: Putative adenine deaminase BC_3012 (589 aa).

Belongs to the metallo-dependent hydrolases superfamily. Adenine deaminase family.

It catalyses the reaction adenine + H2O + H(+) = hypoxanthine + NH4(+). This Bacillus cereus (strain ATCC 14579 / DSM 31 / CCUG 7414 / JCM 2152 / NBRC 15305 / NCIMB 9373 / NCTC 2599 / NRRL B-3711) protein is Putative adenine deaminase BC_3012.